The chain runs to 162 residues: UPF0114 protein PSPA7_5214 (162 aa).

A run of 3 helical transmembrane segments spans residues Leu-15–Phe-35, Leu-53–Val-73, and Leu-136–Leu-156.

Belongs to the UPF0114 family.

It is found in the cell membrane. This is UPF0114 protein PSPA7_5214 from Pseudomonas paraeruginosa (strain DSM 24068 / PA7) (Pseudomonas aeruginosa (strain PA7)).